A 1047-amino-acid polypeptide reads, in one-letter code: Exportin-6 (1047 aa).

One can recognise an Importin N-terminal domain in the interval 32 to 98; it reads IDTILNNYKA…KGLLLDIYLN (67 aa).

The protein belongs to the exportin family.

The protein resides in the nucleus. The protein localises to the cytoplasm. In terms of biological role, probably mediates the nuclear export of actin and profilin-actin complexes. This Dictyostelium discoideum (Social amoeba) protein is Exportin-6 (xpo6).